Reading from the N-terminus, the 128-residue chain is Calcitonin gene-related peptide 1 (128 aa).

Positions 1–25 are cleaved as a signal peptide; sequence MGFLKFSPFLVVSILLLYQACGLQA. Positions 26–80 are excised as a propeptide; it reads VPLRSTLESSPGMAATLSEEEARLLLAALVQNYMQMKVRELEQEQEAEGSSVTAQ. Cysteine 84 and cysteine 89 are joined by a disulfide. The residue at position 119 (phenylalanine 119) is a Phenylalanine amide. The propeptide occupies 125 to 128; the sequence is DLQA.

The protein belongs to the calcitonin family.

It is found in the secreted. Functionally, CGRP1/CALCA is a peptide hormone that induces vasodilation mediated by the CALCRL-RAMP1 receptor complex. Dilates a variety of vessels including the coronary, cerebral and systemic vasculature. Its abundance in the CNS also points toward a neurotransmitter or neuromodulator role. It also elevates platelet cAMP. CGRP1 can also bind and activate CALCR-RAMP1 (AMYR1) receptor complex. This is Calcitonin gene-related peptide 1 from Rattus norvegicus (Rat).